The following is a 181-amino-acid chain: ADP-ribosylation factor 1 (181 aa).

Gly2 carries N-myristoyl glycine lipidation. GTP contacts are provided by residues 24–31 (GLDAAGKT), 67–71 (DVGGQ), and 126–129 (NKQD).

The protein belongs to the small GTPase superfamily. Arf family.

It localises to the golgi apparatus. The catalysed reaction is GTP + H2O = GDP + phosphate + H(+). In terms of biological role, GTP-binding protein involved in protein trafficking; may modulate vesicle budding and uncoating within the Golgi apparatus. This chain is ADP-ribosylation factor 1 (ARF1), found in Chlamydomonas reinhardtii (Chlamydomonas smithii).